An 842-amino-acid polypeptide reads, in one-letter code: MPFNITSVKTSSNGVWQGDNPLNFAFPLLIVQTALIIAVSRFLAVLFKPLRQPKVIAEIVGGILLGPSALGRNMAYMDRIFPKWSMPILESVASIGLLFFLFLVGLELDLSSIRRSGKRAFGIAVAGITLPFIAGVGVAFVIRNTLYTAADKPGYAEFLVFMGVALSITAFPVLARILAELKLLTTQIGETAMAAAAFNDVAAWILLALAVALAGNGGEGGGEKKSPLVSLWVLLSGAGFVVFMLVVIRPGMKWVAKRGSPENDVVRESYVCLTLAGVMVSGFATDLIGIHSIFGAFVFGLTIPKDGEFGQRLIERIEDFVSGLLLPLYFATSGLKTDVAKIRGAESWGMLGLVVVTACAGKIVGTFVVAVMVKVPAREALTLGFLMNTKGLVELIVLNIGKEKKVLNDETFAILVLMALFTTFITTPTVMAIYKPARGTHRKLKDLSASQDSTKEELRILACLHGPANVSSLISLVESIRTTKILRLKLFVMHLMELTERSSSIIMVQRARKNGLPFVHRYRHGERHSNVIGGFEAYRQLGRVAVRPITAVSPLPTMHEDICHMADTKRVTMIILPFHKRWNADHGHSHHHQDGGGDGNVPENVGHGWRLVNQRVLKNAPCSVAVLVDRGLGSIEAQTLSLDGSNVVERVCVIFFGGPDDRESIELGGRMAEHPAVKVTVIRFLVRETLRSTAVTLRPAPSKGKEKNYAFLTTNVDPEKEKELDEGALEDFKSKWKEMVEYKEKEPNNIIEEILSIGQSKDFDLIVVGRGRIPSAEVAALAERQAEHPELGPIGDVLASSINHIIPSILVVQQHNKAHVEDITVSKIVSESSLSINGDTNV.

12 helical membrane-spanning segments follow: residues 26 to 46 (FPLL…LAVL), 55 to 75 (VIAE…RNMA), 86 to 106 (MPIL…LVGL), 122 to 142 (GIAV…AFVI), 155 to 175 (YAEF…PVLA), 193 to 213 (MAAA…AVAL), 228 to 248 (LVSL…LVVI), 283 to 303 (FATD…GLTI), 320 to 340 (FVSG…TDVA), 353 to 373 (LVVV…AVMV), 380 to 400 (ALTL…VLNI), and 413 to 433 (AILV…VMAI). A compositionally biased stretch (basic and acidic residues) spans 585–595 (DHGHSHHHQDG). The tract at residues 585-605 (DHGHSHHHQDGGGDGNVPENV) is disordered.

This sequence belongs to the monovalent cation:proton antiporter 2 (CPA2) transporter (TC 2.A.37) family. CHX (TC 2.A.37.4) subfamily. As to expression, expressed in leaves and stems. Preferentially expressed in guards cells.

The protein localises to the endomembrane system. Its function is as follows. Operates as a K(+)/H(+) antiporter that maintains K(+) homeostasis in guard cells and could regulate pH. Plays a critical role in osmoregulation through the control of stomates opening. The polypeptide is Cation/H(+) antiporter 20 (CHX20) (Arabidopsis thaliana (Mouse-ear cress)).